Here is a 518-residue protein sequence, read N- to C-terminus: Major facilitator superfamily multidrug transporter mfsC (518 aa).

The next 7 helical transmembrane spans lie at 27–47 (VLLT…SVLF), 65–85 (WVLI…GQLG), 88–108 (FGLE…NVIN), 123–143 (ISGV…SNTF), 152–172 (ALAI…VVGS), 183–203 (IFWL…LFLP), and 212–232 (PIDI…VYGL). An N-linked (GlcNAc...) asparagine glycan is attached at Asn-233. 7 consecutive transmembrane segments (helical) span residues 242–262 (SAAM…FLWV), 281–301 (FLVM…WFFI), 315–335 (ILTA…GVFA), 347–367 (ILVA…FAGP), 380–400 (TAII…SILL), 409–429 (AVAG…ILAG), and 455–475 (AFWL…VCYW).

Belongs to the major facilitator superfamily. EmrB family.

Its subcellular location is the membrane. Its function is as follows. Major facilitator superfamily transporter that may be involved in A.fumigatus adaptation to azoles such as vorizonazole. This Aspergillus fumigatus (strain ATCC MYA-4609 / CBS 101355 / FGSC A1100 / Af293) (Neosartorya fumigata) protein is Major facilitator superfamily multidrug transporter mfsC.